We begin with the raw amino-acid sequence, 215 residues long: Nascent polypeptide-associated complex subunit alpha-2 (215 aa).

The interval Met-1 to Ala-51 is disordered. The span at Val-9 to Gly-32 shows a compositional bias: polar residues. 2 positions are modified to phosphoserine: Ser-43 and Ser-132. One can recognise an NAC-A/B domain in the interval Ser-70–Ala-135. Position 142 is an N6-acetyllysine; alternate (Lys-142). Lys-142 is covalently cross-linked (Glycyl lysine isopeptide (Lys-Gly) (interchain with G-Cter in SUMO2); alternate). A Phosphothreonine modification is found at Thr-161. Phosphoserine occurs at positions 166, 186, 191, and 203. The UBA domain occupies Val-176–Leu-213. Thr-214 is modified (phosphothreonine).

This sequence belongs to the NAC-alpha family. As to quaternary structure, part of the nascent polypeptide-associated complex (NAC), consisting of NACA and BTF3. NAC associates with ribosomes through the BTF3 subunit. Both subunits can contact nascent polypeptide chains. Expressed specifically in testis and skeletal muscle.

The protein resides in the cytoplasm. It localises to the nucleus. In terms of biological role, prevents inappropriate targeting of non-secretory polypeptides to the endoplasmic reticulum (ER). Binds to nascent polypeptide chains as they emerge from the ribosome and blocks their interaction with the signal recognition particle (SRP), which normally targets nascent secretory peptides to the ER. Also reduces the inherent affinity of ribosomes for protein translocation sites in the ER membrane (M sites). The chain is Nascent polypeptide-associated complex subunit alpha-2 (NACA2) from Homo sapiens (Human).